The primary structure comprises 249 residues: Indole-3-glycerol phosphate synthase (249 aa).

The protein belongs to the TrpC family.

The enzyme catalyses 1-(2-carboxyphenylamino)-1-deoxy-D-ribulose 5-phosphate + H(+) = (1S,2R)-1-C-(indol-3-yl)glycerol 3-phosphate + CO2 + H2O. Its pathway is amino-acid biosynthesis; L-tryptophan biosynthesis; L-tryptophan from chorismate: step 4/5. The chain is Indole-3-glycerol phosphate synthase from Pyrobaculum neutrophilum (strain DSM 2338 / JCM 9278 / NBRC 100436 / V24Sta) (Thermoproteus neutrophilus).